We begin with the raw amino-acid sequence, 287 residues long: Orotidine 5'-phosphate decarboxylase (287 aa).

Catalysis depends on lysine 97, which acts as the Proton donor.

Belongs to the OMP decarboxylase family. Type 2 subfamily.

The catalysed reaction is orotidine 5'-phosphate + H(+) = UMP + CO2. The protein operates within pyrimidine metabolism; UMP biosynthesis via de novo pathway; UMP from orotate: step 2/2. The protein is Orotidine 5'-phosphate decarboxylase of Clostridium perfringens (strain SM101 / Type A).